The chain runs to 373 residues: 3 beta-hydroxysteroid dehydrogenase/Delta 5--&gt;4-isomerase type 6 (373 aa).

The active-site Proton acceptor is the tyrosine 155. Position 159 (lysine 159) interacts with NAD(+). A helical membrane pass occupies residues 288–308 (VPLLYWLAFMLETVSFLLSPI).

It belongs to the 3-beta-HSD family. Expressed in skin and testis.

Its subcellular location is the endoplasmic reticulum membrane. It is found in the mitochondrion membrane. The enzyme catalyses a 3beta-hydroxy-Delta(5)-steroid + NAD(+) = a 3-oxo-Delta(5)-steroid + NADH + H(+). The catalysed reaction is a 3-oxo-Delta(5)-steroid = a 3-oxo-Delta(4)-steroid. It participates in lipid metabolism; steroid biosynthesis. In terms of biological role, 3-beta-HSD is a bifunctional enzyme, that catalyzes the oxidative conversion of Delta(5)-ene-3-beta-hydroxy steroid, and the oxidative conversion of ketosteroids. The 3-beta-HSD enzymatic system plays a crucial role in the biosynthesis of all classes of hormonal steroids. May be involved in local production of progesterone. This chain is 3 beta-hydroxysteroid dehydrogenase/Delta 5--&gt;4-isomerase type 6 (Hsd3b6), found in Mus musculus (Mouse).